The following is a 236-amino-acid chain: Large ribosomal subunit protein uL1 (236 aa).

The protein belongs to the universal ribosomal protein uL1 family. In terms of assembly, part of the 50S ribosomal subunit.

Functionally, binds directly to 23S rRNA. The L1 stalk is quite mobile in the ribosome, and is involved in E site tRNA release. In terms of biological role, protein L1 is also a translational repressor protein, it controls the translation of the L11 operon by binding to its mRNA. The sequence is that of Large ribosomal subunit protein uL1 from Kocuria rhizophila (strain ATCC 9341 / DSM 348 / NBRC 103217 / DC2201).